A 94-amino-acid polypeptide reads, in one-letter code: Small ubiquitin-related modifier 3 (94 aa).

Lys11 participates in a covalent cross-link: Glycyl lysine isopeptide (Lys-Gly) (interchain with G-Cter in SUMO). Residues 15–92 enclose the Ubiquitin-like domain; the sequence is DHINLKVAGQ…IDVFQQQTGG (78 aa). Gly92 is covalently cross-linked (Glycyl lysine isopeptide (Gly-Lys) (interchain with K-? in acceptor proteins)). A propeptide spanning residues 93 to 94 is cleaved from the precursor; sequence VC.

This sequence belongs to the ubiquitin family. SUMO subfamily. Interacts with sae2 and ube2i. Covalently attached to a number of proteins. Polymeric chains can be formed through Lys-11 cross-linking. Post-translationally, cleavage of precursor form by a sentrin-specific protease is necessary for function.

The protein resides in the cytoplasm. It localises to the nucleus. The protein localises to the PML body. Its function is as follows. Ubiquitin-like protein which can be covalently attached to target lysines either as a monomer or as a lysine-linked polymer. Does not seem to be involved in protein degradation and may function as an antagonist of ubiquitin in the degradation process. Plays a role in a number of cellular processes such as nuclear transport, DNA replication and repair, mitosis and signal transduction. Covalent attachment to its substrates requires prior activation by the E1 complex sae1-sae2 and linkage to the E2 enzyme ube2i. This chain is Small ubiquitin-related modifier 3 (sumo3), found in Xenopus laevis (African clawed frog).